We begin with the raw amino-acid sequence, 508 residues long: Light-independent protochlorophyllide reductase subunit B (508 aa).

Position 36 (D36) interacts with [4Fe-4S] cluster. D294 (proton donor) is an active-site residue. Position 429-430 (429-430 (GM)) interacts with substrate.

Belongs to the ChlB/BchB/BchZ family. As to quaternary structure, protochlorophyllide reductase is composed of three subunits; ChlL, ChlN and ChlB. Forms a heterotetramer of two ChlB and two ChlN subunits. It depends on [4Fe-4S] cluster as a cofactor.

The catalysed reaction is chlorophyllide a + oxidized 2[4Fe-4S]-[ferredoxin] + 2 ADP + 2 phosphate = protochlorophyllide a + reduced 2[4Fe-4S]-[ferredoxin] + 2 ATP + 2 H2O. It participates in porphyrin-containing compound metabolism; chlorophyll biosynthesis (light-independent). In terms of biological role, component of the dark-operative protochlorophyllide reductase (DPOR) that uses Mg-ATP and reduced ferredoxin to reduce ring D of protochlorophyllide (Pchlide) to form chlorophyllide a (Chlide). This reaction is light-independent. The NB-protein (ChlN-ChlB) is the catalytic component of the complex. The protein is Light-independent protochlorophyllide reductase subunit B of Rippkaea orientalis (strain PCC 8801 / RF-1) (Cyanothece sp. (strain PCC 8801)).